We begin with the raw amino-acid sequence, 388 residues long: Protochlorophyllide reductase A, chloroplastic (388 aa).

The transit peptide at 1–74 (MALQLLPSTL…SPSGKKTLRQ (74 aa)) directs the protein to the chloroplast. The span at 48 to 68 (VATAPSPVTTSPGSTASSPSG) shows a compositional bias: low complexity. Positions 48–69 (VATAPSPVTTSPGSTASSPSGK) are disordered.

The protein belongs to the short-chain dehydrogenases/reductases (SDR) family. POR subfamily.

The protein resides in the plastid. It localises to the chloroplast. The catalysed reaction is chlorophyllide a + NADP(+) = protochlorophyllide a + NADPH + H(+). It participates in porphyrin-containing compound metabolism; chlorophyll biosynthesis. In terms of biological role, phototransformation of protochlorophyllide (Pchlide) to chlorophyllide (Chlide). The polypeptide is Protochlorophyllide reductase A, chloroplastic (PORA) (Hordeum vulgare (Barley)).